Consider the following 217-residue polypeptide: Somatotropin (217 aa).

A signal peptide spans 1–26; sequence MAAGSRTSLLLAFALLCLPWLQEGSA. Position 44 (His44) interacts with Zn(2+). The cysteines at positions 79 and 191 are disulfide-linked. At Ser132 the chain carries Phosphoserine. Glu200 is a binding site for Zn(2+). Cys208 and Cys215 form a disulfide bridge.

This sequence belongs to the somatotropin/prolactin family.

The protein localises to the secreted. In terms of biological role, plays an important role in growth control. Its major role in stimulating body growth is to stimulate the liver and other tissues to secrete IGF1. It stimulates both the differentiation and proliferation of myoblasts. It also stimulates amino acid uptake and protein synthesis in muscle and other tissues. The sequence is that of Somatotropin (GH1) from Macaca mulatta (Rhesus macaque).